The sequence spans 293 residues: Shikimate dehydrogenase (NADP(+)) (293 aa).

Residues 26-28 (SKS) and threonine 73 contribute to the shikimate site. Lysine 77 acts as the Proton acceptor in catalysis. Glutamate 89 is a binding site for NADP(+). The shikimate site is built by asparagine 98 and aspartate 113. NADP(+) contacts are provided by residues 137-141 (GAGGA), 161-166 (NRTRQR), and isoleucine 231. Tyrosine 233 serves as a coordination point for shikimate. Glycine 254 serves as a coordination point for NADP(+).

Belongs to the shikimate dehydrogenase family. Homodimer.

It catalyses the reaction shikimate + NADP(+) = 3-dehydroshikimate + NADPH + H(+). The protein operates within metabolic intermediate biosynthesis; chorismate biosynthesis; chorismate from D-erythrose 4-phosphate and phosphoenolpyruvate: step 4/7. Its function is as follows. Involved in the biosynthesis of the chorismate, which leads to the biosynthesis of aromatic amino acids. Catalyzes the reversible NADPH linked reduction of 3-dehydroshikimate (DHSA) to yield shikimate (SA). The chain is Shikimate dehydrogenase (NADP(+)) from Bartonella quintana (strain Toulouse) (Rochalimaea quintana).